We begin with the raw amino-acid sequence, 236 residues long: Concanavalin-Ma (236 aa).

Mn(2+) contacts are provided by Glu-8 and Asp-10. Ca(2+) is bound by residues Asp-10, Tyr-12, Asn-14, and Asp-19. Tyr-12 serves as a coordination point for a carbohydrate. Mn(2+) contacts are provided by Asp-19 and His-24. 98 to 99 serves as a coordination point for a carbohydrate; the sequence is LY. Residue Asp-207 participates in Ca(2+) binding. Arg-227 is a binding site for a carbohydrate.

The protein belongs to the leguminous lectin family. In terms of assembly, homotetramer.

In terms of biological role, glucose/D-mannose specific lectin. The polypeptide is Concanavalin-Ma (Canavalia rosea (Beach bean)).